Here is a 1087-residue protein sequence, read N- to C-terminus: Platelet-derived growth factor receptor alpha (1087 aa).

Positions 1–23 (MGTPPRTFLILGCFLTGPLLTLC) are cleaved as a signal peptide. Residues 24 to 528 (QLPLPTIVPN…PTLRSELTVA (505 aa)) are Extracellular-facing. 5 consecutive Ig-like C2-type domains span residues 26 to 104 (PLPT…YNHT), 116 to 208 (IYIY…IYIL), 213 to 312 (QLPV…VHDK), 314 to 411 (FIHL…SLLI), and 414 to 517 (PALI…LKLV). N-linked (GlcNAc...) asparagine glycans are attached at residues Asn-44, Asn-75, Asn-88, and Asn-102. Cysteines 49 and 99 form a disulfide. 2 disulfide bridges follow: Cys-149–Cys-189 and Cys-235–Cys-290. Asn-353, Asn-359, Asn-458, and Asn-468 each carry an N-linked (GlcNAc...) asparagine glycan. Cys-435 and Cys-501 are disulfide-bonded. A helical transmembrane segment spans residues 529 to 549 (AAVLVLLVIVIISLIVLVIIW). The Cytoplasmic segment spans residues 550–1087 (KQKPRYEIRW…SSDLVEDSFL (538 aa)). Phosphotyrosine; by autocatalysis is present on residues Tyr-572 and Tyr-574. Residues 593 to 954 (LVLGRILGSG…HLSEIVESLL (362 aa)) enclose the Protein kinase domain. Residues 599–607 (LGSGAFGKV) and Lys-627 contribute to the ATP site. Phosphotyrosine; by autocatalysis is present on residues Tyr-720, Tyr-731, Tyr-742, Tyr-754, Tyr-762, and Tyr-768. The Proton acceptor role is filled by Asp-818. Residues Tyr-849 and Tyr-988 each carry the phosphotyrosine; by autocatalysis modification. A compositionally biased stretch (basic and acidic residues) spans 1000 to 1011 (KDRESGFDEQRL). Positions 1000-1059 (KDRESGFDEQRLSADSGYITPLPDIDPVSEDELGKRNRHSSQTSEESAIETGSSSSTFIK) are disordered. A Phosphotyrosine; by autocatalysis modification is found at Tyr-1017. Positions 1039 to 1057 (SSQTSEESAIETGSSSSTF) are enriched in polar residues.

This sequence belongs to the protein kinase superfamily. Tyr protein kinase family. CSF-1/PDGF receptor subfamily. Interacts with homodimeric PDGFA, PDGFB and PDGFC, and with heterodimers formed by PDGFA and PDGFB. Monomer in the absence of bound ligand. Interaction with dimeric PDGFA, PDGFB and/or PDGFC leads to receptor dimerization, where both PDGFRA homodimers and heterodimers with PDGFRB are observed. Ubiquitinated, leading to its internalization and degradation. In terms of processing, autophosphorylated on tyrosine residues upon ligand binding. Autophosphorylation occurs in trans, i.e. one subunit of the dimeric receptor phosphorylates tyrosine residues on the other subunit.

It localises to the cell membrane. Its subcellular location is the cell projection. It is found in the cilium. The protein localises to the golgi apparatus. It catalyses the reaction L-tyrosyl-[protein] + ATP = O-phospho-L-tyrosyl-[protein] + ADP + H(+). Present in an inactive conformation in the absence of bound ligand. Binding of PDGFA and/or PDGFB leads to dimerization and activation by autophosphorylation on tyrosine residues. Tyrosine-protein kinase that acts as a cell-surface receptor for PDGFA, PDGFB and PDGFC and plays an essential role in the regulation of embryonic development, cell proliferation, survival and chemotaxis. Depending on the context, promotes or inhibits cell proliferation and cell migration. Plays an important role in the differentiation of bone marrow-derived mesenchymal stem cells. Required for normal skeleton development. Required for normal development of the gastrointestinal tract. Plays a role in cell migration and chemotaxis in wound healing. Plays a role in platelet activation, secretion of agonists from platelet granules, and in thrombin-induced platelet aggregation. Binding of its cognate ligands - homodimeric PDGFA, homodimeric PDGFB, heterodimers formed by PDGFA and PDGFB or homodimeric PDGFC -leads to the activation of several signaling cascades; the response depends on the nature of the bound ligand and is modulated by the formation of heterodimers between PDGFRA and PDGFRB. Phosphorylates PIK3R1, PLCG1, and PTPN11. Activation of PLCG1 leads to the production of the cellular signaling molecules diacylglycerol and inositol 1,4,5-trisphosphate, mobilization of cytosolic Ca(2+) and the activation of protein kinase C. Phosphorylates PIK3R1, the regulatory subunit of phosphatidylinositol 3-kinase, and thereby mediates activation of the AKT1 signaling pathway. Mediates activation of HRAS and of the MAP kinases MAPK1/ERK2 and/or MAPK3/ERK1. Promotes activation of STAT family members STAT1, STAT3 and STAT5A and/or STAT5B. Receptor signaling is down-regulated by protein phosphatases that dephosphorylate the receptor and its down-stream effectors, and by rapid internalization of the activated receptor. The polypeptide is Platelet-derived growth factor receptor alpha (PDGFRA) (Gallus gallus (Chicken)).